Here is a 245-residue protein sequence, read N- to C-terminus: Epoxyqueuosine reductase QueH (245 aa).

[4Fe-4S] cluster-binding residues include Cys-52, Cys-53, Cys-131, and Cys-134. The cysteines at positions 214 and 216 are disulfide-linked.

This sequence belongs to the QueH family.

The enzyme catalyses epoxyqueuosine(34) in tRNA + AH2 = queuosine(34) in tRNA + A + H2O. It participates in tRNA modification; tRNA-queuosine biosynthesis. Functionally, catalyzes the conversion of epoxyqueuosine (oQ) to queuosine (Q), which is a hypermodified base found in the wobble positions of tRNA(Asp), tRNA(Asn), tRNA(His) and tRNA(Tyr). This is Epoxyqueuosine reductase QueH from Haemophilus influenzae (strain ATCC 51907 / DSM 11121 / KW20 / Rd).